A 373-amino-acid polypeptide reads, in one-letter code: Mating-type protein A-2 (373 aa).

The segment at 1 to 22 (MNLLNMQPKRSEQPAMFEENRA) is disordered.

The protein to P.anserina SMR1.

Functionally, required, together with mating-type protein A-3, for efficient ascospore formation. This chain is Mating-type protein A-2 (matA-2), found in Neurospora crassa (strain ATCC 24698 / 74-OR23-1A / CBS 708.71 / DSM 1257 / FGSC 987).